The sequence spans 590 residues: Negative elongation factor D (590 aa).

The disordered stretch occupies residues 15–43 (YGSAAEWGDEADGGQQEDDSGEGEDDAEV). Acidic residues predominate over residues 21–43 (WGDEADGGQQEDDSGEGEDDAEV).

This sequence belongs to the NELF-D family. The NELF complex is composed of NELFA, NELFB, NELFCD and NELFE; NELFA and NELFCD form a stable subcomplex that binds primarily through NELFCD to the N-terminus of NELFB. Binds RNA which may help to stabilize the NELF complex on nucleic acid. In vitro, the NELFA:NELFCD subcomplex binds to ssDNA and ssRNA in a sequence- and structure-dependent manner. Interacts with ARAF1. Interacts with PCF11. Interacts with NELFB. Interacts with KAT8.

It localises to the nucleus. Functionally, essential component of the NELF complex, a complex that negatively regulates the elongation of transcription by RNA polymerase II. The NELF complex, which acts via an association with the DSIF complex and causes transcriptional pausing, is counteracted by the P-TEFb kinase complex. This is Negative elongation factor D (NELFCD) from Pongo abelii (Sumatran orangutan).